The following is an 88-amino-acid chain: Protein MATERNALLY EXPRESSED GENE 2 (88 aa).

Residues 1-27 (MEYRKRVDALVFFSLLLLGYFAAHAHG) form the signal peptide. Residues C65 and C87 are joined by a disulfide bond.

Belongs to the MEG family. In terms of tissue distribution, expressed exclusively in endosperm.

This is Protein MATERNALLY EXPRESSED GENE 2 (MEG2) from Zea mays (Maize).